The sequence spans 776 residues: DNA ligase (776 aa).

NAD(+)-binding positions include 31-35 (DAEYD), 80-81 (SL), and E112. Catalysis depends on K114, which acts as the N6-AMP-lysine intermediate. The NAD(+) site is built by R135, E172, K288, and K312. The Zn(2+) site is built by C406, C409, C436, and C442. Residues 693 to 776 (AEGLPLAGQT…TFLAEQGIAV (84 aa)) enclose the BRCT domain.

Belongs to the NAD-dependent DNA ligase family. LigA subfamily. Requires Mg(2+) as cofactor. It depends on Mn(2+) as a cofactor.

It carries out the reaction NAD(+) + (deoxyribonucleotide)n-3'-hydroxyl + 5'-phospho-(deoxyribonucleotide)m = (deoxyribonucleotide)n+m + AMP + beta-nicotinamide D-nucleotide.. Its function is as follows. DNA ligase that catalyzes the formation of phosphodiester linkages between 5'-phosphoryl and 3'-hydroxyl groups in double-stranded DNA using NAD as a coenzyme and as the energy source for the reaction. It is essential for DNA replication and repair of damaged DNA. In Pseudomonas putida (strain ATCC 700007 / DSM 6899 / JCM 31910 / BCRC 17059 / LMG 24140 / F1), this protein is DNA ligase.